Consider the following 152-residue polypeptide: Small ribosomal subunit protein bS6 (152 aa).

Belongs to the bacterial ribosomal protein bS6 family.

In terms of biological role, binds together with bS18 to 16S ribosomal RNA. The chain is Small ribosomal subunit protein bS6 from Bdellovibrio bacteriovorus (strain ATCC 15356 / DSM 50701 / NCIMB 9529 / HD100).